Consider the following 137-residue polypeptide: Histone H2B.1, sperm (137 aa).

Positions 1–43 (MPSQKSPTKRSPTKRSPQKGGKGAKRGGKAGKRRRGVAVKRRR) are disordered. 3 short sequence motifs (SPKK motif) span residues 6-9 (SPTK), 11-14 (SPTK), and 16-19 (SPQK). The segment covering 7 to 43 (PTKRSPTKRSPQKGGKGAKRGGKAGKRRRGVAVKRRR) has biased composition (basic residues). Phosphoserine is present on residues Ser11 and Ser16. A glycan (O-linked (GlcNAc) serine) is linked at Ser124. Lys132 is covalently cross-linked (Glycyl lysine isopeptide (Lys-Gly) (interchain with G-Cter in ubiquitin)).

It belongs to the histone H2B family. In terms of assembly, the nucleosome is a histone octamer containing two molecules each of H2A, H2B, H3 and H4 assembled in one H3-H4 heterotetramer and two H2A-H2B heterodimers. The octamer wraps approximately 147 bp of DNA. Post-translationally, monoubiquitination of Lys-132 gives a specific tag for epigenetic transcriptional activation and is also prerequisite for histone H3 'Lys-4' and 'Lys-79' methylation. In terms of processing, phosphorylated on SPKK motifs 2 and 3; which may regulate DNA binding. Dephosphorylated during maturation of spermatids to mature sperm and rephosphorylated at fertilization. GlcNAcylation at Ser-124 promotes monoubiquitination of Lys-132. It fluctuates in response to extracellular glucose, and associates with transcribed genes.

The protein resides in the nucleus. The protein localises to the chromosome. In terms of biological role, core component of nucleosome. Nucleosomes wrap and compact DNA into chromatin, limiting DNA accessibility to the cellular machineries which require DNA as a template. Histones thereby play a central role in transcription regulation, DNA repair, DNA replication and chromosomal stability. DNA accessibility is regulated via a complex set of post-translational modifications of histones, also called histone code, and nucleosome remodeling. The sequence is that of Histone H2B.1, sperm from Psammechinus miliaris (Green sea urchin).